Consider the following 635-residue polypeptide: MAMSLLQDWCRSLDVDAHRALLVTGIPEGLEQADVEAVLQPTLLPLGTFRLRHMKALMNEKAQAALVEFVEDVNHAAIPREIPGKDGVWRVLWKDRAQDTRVLRQMRRLLLDDGPTQAAEAGTPGEAPTPPASETQAQDSGEVTGQAGSLLGAARNPRRGRRGRRNRTRRNRLTQKGKKRSRGGRPSAPARSEAEDSSDESLGIVIEEIDQGDLSGEEDQSALYATLQAAARELVRQWAPCNSEGEEDGPREFLALVTVTDKSKKEEAEKEPAGAESIRLNTKEDKNGVPDLVALLAVRDTPDEEPVDSDTSESDSQESGDQETEELDNPEFVAIVAYTDPSDPWAREEMLKIASVIESLGWSDEKDKRDPLRQVLSVMSKDTNGTRVKVEEAGREVDAVVLRKAGDDGDLRECISTLAQPDLPPQAKKAGRGLFGGWSEHREDEGGLLELVALLAAQDMAEVMKEEKENAWEGGKYKYPKGKLGEVLALLAARENMGSNEGSEEASDEQSEEESEDTESEASEPEDRASRKPRAKRARTAPRGLTPAGAPPTASGARKTRAGGRGRGRGVTPEKKAGSRGSAQDDAAGSRKKKGSAGAGAHARAGEAKGQAPTGSKAARGKKARRGRRLPPKCR.

Disordered regions lie at residues 115-202, 260-332, and 492-635; these read PTQA…DESL, TDKS…NPEF, and AARE…PKCR. Residues 133-147 are compositionally biased toward polar residues; it reads SETQAQDSGEVTGQA. A compositionally biased stretch (basic residues) spans 156–183; the sequence is NPRRGRRGRRNRTRRNRLTQKGKKRSRG. Residues 261–273 show a composition bias toward basic and acidic residues; the sequence is DKSKKEEAEKEPA. Acidic residues-rich tracts occupy residues 302–329 and 502–524; these read PDEEPVDSDTSESDSQESGDQETEELDN and GSEEASDEQSEEESEDTESEASE. Residues 531–540 show a composition bias toward basic residues; sequence RKPRAKRART. Residues 541–557 are compositionally biased toward low complexity; it reads APRGLTPAGAPPTASGA. Composition is skewed to basic residues over residues 558–568 and 619–635; these read RKTRAGGRGRG and ARGKKARRGRRLPPKCR.

It belongs to the PNMA family.

The chain is Paraneoplastic antigen-like protein 8B from Homo sapiens (Human).